The primary structure comprises 60 residues: Large ribosomal subunit protein bL32 (60 aa).

A compositionally biased stretch (basic residues) spans Met-1–Arg-16. A disordered region spans residues Met-1–Asp-20.

This sequence belongs to the bacterial ribosomal protein bL32 family.

The chain is Large ribosomal subunit protein bL32 (rpmF) from Chlamydia pneumoniae (Chlamydophila pneumoniae).